The chain runs to 182 residues: Crossover junction endodeoxyribonuclease RuvC (182 aa).

Residues D7, E69, and D141 contribute to the active site. Mg(2+)-binding residues include D7, E69, and D141.

The protein belongs to the RuvC family. Homodimer which binds Holliday junction (HJ) DNA. The HJ becomes 2-fold symmetrical on binding to RuvC with unstacked arms; it has a different conformation from HJ DNA in complex with RuvA. In the full resolvosome a probable DNA-RuvA(4)-RuvB(12)-RuvC(2) complex forms which resolves the HJ. Requires Mg(2+) as cofactor.

It is found in the cytoplasm. The enzyme catalyses Endonucleolytic cleavage at a junction such as a reciprocal single-stranded crossover between two homologous DNA duplexes (Holliday junction).. Functionally, the RuvA-RuvB-RuvC complex processes Holliday junction (HJ) DNA during genetic recombination and DNA repair. Endonuclease that resolves HJ intermediates. Cleaves cruciform DNA by making single-stranded nicks across the HJ at symmetrical positions within the homologous arms, yielding a 5'-phosphate and a 3'-hydroxyl group; requires a central core of homology in the junction. The consensus cleavage sequence is 5'-(A/T)TT(C/G)-3'. Cleavage occurs on the 3'-side of the TT dinucleotide at the point of strand exchange. HJ branch migration catalyzed by RuvA-RuvB allows RuvC to scan DNA until it finds its consensus sequence, where it cleaves and resolves the cruciform DNA. The chain is Crossover junction endodeoxyribonuclease RuvC from Variovorax paradoxus (strain S110).